The chain runs to 82 residues: uncharacterized protein (82 aa).

This is an uncharacterized protein from Dictyostelium discoideum (Social amoeba).